Consider the following 155-residue polypeptide: Shadow of prion protein (155 aa).

A signal peptide spans 1–27 (MSGMNQVVATCWTCLLLSAFLCEPVLS). The interval 29-71 (GGRGGSRGSSRGSHSRSPKAGGYRGGGPHNGGTRGSRYRGRSS) is disordered. Gly residues predominate over residues 50 to 62 (GYRGGGPHNGGTR). The N-linked (GlcNAc...) asparagine glycan is linked to N113. S125 carries GPI-anchor amidated serine lipidation. Residues 126-155 (TQNGSSLSQLVSIIIATFSPKYGLLMDSIL) constitute a propeptide, removed in mature form. N-linked (GlcNAc...) asparagine glycosylation occurs at N128.

Belongs to the SPRN family.

It localises to the cell membrane. In terms of biological role, prion-like protein that has PrP(C)-like neuroprotective activity. This Gasterosteus aculeatus (Three-spined stickleback) protein is Shadow of prion protein (sprn).